We begin with the raw amino-acid sequence, 146 residues long: Single-stranded DNA-binding protein 1-A, mitochondrial (146 aa).

The transit peptide at 1-17 directs the protein to the mitochondrion; the sequence is MFHRPALQVFRQFARCQ. Positions 28–140 constitute an SSB domain; the sequence is INKVQLLGRV…IIADNIIFLS (113 aa).

Homotetramer.

It is found in the mitochondrion. It localises to the mitochondrion matrix. The protein localises to the mitochondrion nucleoid. Binds preferentially and cooperatively to pyrimidine rich single-stranded DNA (ss-DNA). Required to maintain the copy number of mitochondrial DNA (mtDNA) and plays crucial roles during mtDNA replication that stimulate activity of the DNA polymerase at the replication fork. May also function in mtDNA repair. The chain is Single-stranded DNA-binding protein 1-A, mitochondrial (ssbp1-a) from Xenopus laevis (African clawed frog).